A 286-amino-acid polypeptide reads, in one-letter code: ATP synthase gamma chain (286 aa).

It belongs to the ATPase gamma chain family. As to quaternary structure, F-type ATPases have 2 components, CF(1) - the catalytic core - and CF(0) - the membrane proton channel. CF(1) has five subunits: alpha(3), beta(3), gamma(1), delta(1), epsilon(1). CF(0) has three main subunits: a, b and c.

Its subcellular location is the cell membrane. Its function is as follows. Produces ATP from ADP in the presence of a proton gradient across the membrane. The gamma chain is believed to be important in regulating ATPase activity and the flow of protons through the CF(0) complex. In Ureaplasma parvum serovar 3 (strain ATCC 27815 / 27 / NCTC 11736), this protein is ATP synthase gamma chain.